The sequence spans 406 residues: Phosphorylase b kinase gamma catalytic chain, liver/testis isoform (406 aa).

A Protein kinase domain is found at 24–291 (YDPKDVIGRG…AEQALQHPFF (268 aa)). Residues 30-38 (IGRGVSSVV) and Lys-53 each bind ATP. Asp-153 serves as the catalytic Proton acceptor. The tract at residues 306 to 330 (QRFRVAVWTVLAAGRVALSTHRVRP) is calmodulin-binding (domain-N). Ser-345 bears the Phosphoserine mark. Residues 346–370 (VRHLIDNCAFRLYGHWVKKGEQQNR) form a calmodulin-binding (domain-C) region.

The protein belongs to the protein kinase superfamily. CAMK Ser/Thr protein kinase family. Hexadecamer of 4 heterotetramers, each composed of alpha, beta, gamma, and delta subunits. Alpha (PHKA1 or PHKA2) and beta (PHKB) are regulatory subunits, gamma (PHKG1 or PHKG2) is the catalytic subunit, and delta is calmodulin.

The enzyme catalyses 2 ATP + phosphorylase b = 2 ADP + phosphorylase a.. In terms of biological role, catalytic subunit of the phosphorylase b kinase (PHK), which mediates the neural and hormonal regulation of glycogen breakdown (glycogenolysis) by phosphorylating and thereby activating glycogen phosphorylase. May regulate glycogeneolysis in the testis. In vitro, phosphorylates PYGM. The polypeptide is Phosphorylase b kinase gamma catalytic chain, liver/testis isoform (PHKG2) (Homo sapiens (Human)).